Here is a 278-residue protein sequence, read N- to C-terminus: Dermonecrotic toxin LspiSicTox-betaIE2i (278 aa).

Residue His5 is part of the active site. Mg(2+) contacts are provided by Glu25 and Asp27. His41 (nucleophile) is an active-site residue. Disulfide bonds link Cys45/Cys51 and Cys47/Cys190. Glu85 contacts Mg(2+).

It belongs to the arthropod phospholipase D family. Class II subfamily. The cofactor is Mg(2+). Expressed by the venom gland.

It localises to the secreted. It carries out the reaction an N-(acyl)-sphingosylphosphocholine = an N-(acyl)-sphingosyl-1,3-cyclic phosphate + choline. It catalyses the reaction an N-(acyl)-sphingosylphosphoethanolamine = an N-(acyl)-sphingosyl-1,3-cyclic phosphate + ethanolamine. The enzyme catalyses a 1-acyl-sn-glycero-3-phosphocholine = a 1-acyl-sn-glycero-2,3-cyclic phosphate + choline. The catalysed reaction is a 1-acyl-sn-glycero-3-phosphoethanolamine = a 1-acyl-sn-glycero-2,3-cyclic phosphate + ethanolamine. In terms of biological role, dermonecrotic toxins cleave the phosphodiester linkage between the phosphate and headgroup of certain phospholipids (sphingolipid and lysolipid substrates), forming an alcohol (often choline) and a cyclic phosphate. This toxin acts on sphingomyelin (SM). It may also act on ceramide phosphoethanolamine (CPE), lysophosphatidylcholine (LPC) and lysophosphatidylethanolamine (LPE), but not on lysophosphatidylserine (LPS), and lysophosphatidylglycerol (LPG). It acts by transphosphatidylation, releasing exclusively cyclic phosphate products as second products. Induces dermonecrosis, hemolysis, increased vascular permeability, edema, inflammatory response, and platelet aggregation. The polypeptide is Dermonecrotic toxin LspiSicTox-betaIE2i (Loxosceles spinulosa (Recluse spider)).